Here is a 354-residue protein sequence, read N- to C-terminus: NADH-quinone oxidoreductase subunit H 2 (354 aa).

Helical transmembrane passes span 4 to 24 (IALF…VLLT), 81 to 101 (ILAP…VPFG), 130 to 150 (IGLL…ALAG), 170 to 190 (VSYE…SGSF), 201 to 221 (GGFW…FIYL), 269 to 289 (VACI…PGFL), 296 to 316 (LVPV…YIWV), and 333 to 353 (WKFL…FVAL).

The protein belongs to the complex I subunit 1 family. NDH-1 is composed of 14 different subunits. Subunits NuoA, H, J, K, L, M, N constitute the membrane sector of the complex.

It localises to the cell inner membrane. It catalyses the reaction a quinone + NADH + 5 H(+)(in) = a quinol + NAD(+) + 4 H(+)(out). Functionally, NDH-1 shuttles electrons from NADH, via FMN and iron-sulfur (Fe-S) centers, to quinones in the respiratory chain. The immediate electron acceptor for the enzyme in this species is believed to be ubiquinone. Couples the redox reaction to proton translocation (for every two electrons transferred, four hydrogen ions are translocated across the cytoplasmic membrane), and thus conserves the redox energy in a proton gradient. This subunit may bind ubiquinone. The protein is NADH-quinone oxidoreductase subunit H 2 of Koribacter versatilis (strain Ellin345).